Here is a 380-residue protein sequence, read N- to C-terminus: N-acetylaspartylglutamate synthase A (380 aa).

The 186-residue stretch at 115-300 folds into the ATP-grasp domain; it reads FQELAGHGVP…VGAIIADYAM (186 aa). ATP-binding positions include Lys154, 189-199, and Arg215; that span reads QKYVKESHGKD. Mg(2+) contacts are provided by Asp260, Glu273, and Asn275. Positions 260, 273, and 275 each coordinate Mn(2+). At Ser319 the chain carries Phosphoserine. The disordered stretch occupies residues 345 to 370; sequence GSTSSESEPELGEARDSSVKTMGAPP.

The protein belongs to the RimK family. Mg(2+) serves as cofactor. The cofactor is Mn(2+). In terms of tissue distribution, highly expressed in spinal cord and brain.

The protein resides in the cytoplasm. It catalyses the reaction N-acetyl-L-aspartate + L-glutamate + ATP = N-acetyl-L-aspartyl-L-glutamate + ADP + phosphate + H(+). The catalysed reaction is N-acetyl-L-aspartate + 2 L-glutamate + 2 ATP = N-acetyl-L-aspartyl-L-glutamyl-L-glutamate + 2 ADP + 2 phosphate + 2 H(+). Its function is as follows. Catalyzes the synthesis of N-acetyl-L-aspartyl-L-glutamate (NAAG) and N-acetyl-L-aspartyl-L-glutamyl-L-glutamate. The sequence is that of N-acetylaspartylglutamate synthase A (Rimkla) from Mus musculus (Mouse).